We begin with the raw amino-acid sequence, 329 residues long: Ephrin-B1 (329 aa).

Positions 1 to 20 (MEGLRRLLGLLLVLYRLCSA) are cleaved as a signal peptide. Over 21–226 (LGKNLEPVTW…FFNSKIAVFA (206 aa)) the chain is Extracellular. Residues 23–157 (KNLEPVTWNS…TRSMKIIMKV (135 aa)) form the Ephrin RBD domain. Cystine bridges form between C57/C94 and C82/C146. N132 carries N-linked (GlcNAc...) asparagine glycosylation. The disordered stretch occupies residues 163 to 192 (AVPPEQLTTTRPSKEADNTGKIATFGPWNG). N203 carries an N-linked (GlcNAc...) asparagine glycan. The helical transmembrane segment at 227-247 (AIGAGCVIFILIIIFLVVLLI) threads the bilayer. The Cytoplasmic portion of the chain corresponds to 248–329 (KIRKRHRKHT…QSPANIYYKV (82 aa)). The PDZ-binding signature appears at 327–329 (YKV).

It belongs to the ephrin family. Interacts with TLE4 through the PDZ-binding motif. In terms of processing, inducible phosphorylation of tyrosine residues in the cytoplasmic domain. Tyrosine phosphorylation inhibits TLE4-binding. As to expression, expressed at low levels in most tissues with highest levels in the kidney, oocytes, ovary and testis.

Its subcellular location is the membrane. In terms of biological role, cell surface transmembrane ligand for Eph receptors, a family of receptor tyrosine kinases which are crucial for migration, repulsion and adhesion during neuronal, vascular and epithelial development. Binds promiscuously Eph receptors residing on adjacent cells, leading to contact-dependent bidirectional signaling into neighboring cells. The signaling pathway downstream of the receptor is referred to as forward signaling while the signaling pathway downstream of the ephrin ligand is referred to as reverse signaling. May have a role in the developing mesenchymal and nervous tissue. In Xenopus laevis (African clawed frog), this protein is Ephrin-B1 (efnb1).